A 313-amino-acid chain; its full sequence is Platelet glycoprotein VI (313 aa).

The first 21 residues, 1–21 (MSPASPTFFCIGLCVLQVIQT), serve as a signal peptide directing secretion. Residues 22-265 (QSGPLPKPSL…FGFAHQHYAK (244 aa)) are Extracellular-facing. Ig-like C2-type domains are found at residues 27-105 (PKPS…DQLE) and 115-197 (PSLS…APSD). An intrachain disulfide couples Cys-49 to Cys-89. N-linked (GlcNAc...) asparagine glycosylation is present at Asn-93. A disulfide bridge connects residues Cys-135 and Cys-181. The tract at residues 213-236 (VPTEESFPVTESSRRPSILPTNKI) is disordered. N-linked (GlcNAc...) asparagine glycosylation occurs at Asn-244. The chain crosses the membrane as a helical span at residues 266–286 (GNLVRICLGATIIIILLGLLA). The Cytoplasmic segment spans residues 287–313 (EDWHSRKKCLQHRMRALQRPLPPLPLA).

As to quaternary structure, associated with Fc receptor gamma chain. The GPVI:FcRgamma complex is associated with the Src kinase family FYN and LYN. Interacts with TRAF4. Interacts with COL1A1, but not with COL4A4. Megakaryocytes and platelets.

Its subcellular location is the cell membrane. In terms of biological role, collagen receptor involved in collagen-induced platelet adhesion and activation. Plays a key role in platelet procoagulant activity and subsequent thrombin and fibrin formation. This procoagulant function may contribute to arterial and venous thrombus formation. The signaling pathway involves the FcR gamma-chain, the Src kinases (likely FYN or LYN) and SYK, the adapter protein LAT and leads to the activation of PLCG2. The chain is Platelet glycoprotein VI from Mus musculus (Mouse).